The following is a 289-amino-acid chain: Acetyl-coenzyme A carboxylase carboxyl transferase subunit beta (289 aa).

One can recognise a CoA carboxyltransferase N-terminal domain in the interval 36–289 (MWLRCPHCHQ…LLKTGSVANE (254 aa)). 4 residues coordinate Zn(2+): Cys-40, Cys-43, Cys-58, and Cys-61. The C4-type zinc-finger motif lies at 40-61 (CPHCHQLLFAKQLTQYAVCPNC).

Belongs to the AccD/PCCB family. In terms of assembly, acetyl-CoA carboxylase is a heterohexamer composed of biotin carboxyl carrier protein (AccB), biotin carboxylase (AccC) and two subunits each of ACCase subunit alpha (AccA) and ACCase subunit beta (AccD). The cofactor is Zn(2+).

The protein localises to the cytoplasm. It carries out the reaction N(6)-carboxybiotinyl-L-lysyl-[protein] + acetyl-CoA = N(6)-biotinyl-L-lysyl-[protein] + malonyl-CoA. It functions in the pathway lipid metabolism; malonyl-CoA biosynthesis; malonyl-CoA from acetyl-CoA: step 1/1. Functionally, component of the acetyl coenzyme A carboxylase (ACC) complex. Biotin carboxylase (BC) catalyzes the carboxylation of biotin on its carrier protein (BCCP) and then the CO(2) group is transferred by the transcarboxylase to acetyl-CoA to form malonyl-CoA. The polypeptide is Acetyl-coenzyme A carboxylase carboxyl transferase subunit beta (Limosilactobacillus reuteri subsp. reuteri (strain JCM 1112) (Lactobacillus reuteri)).